The chain runs to 112 residues: Large ribosomal subunit protein bL17 (112 aa).

It belongs to the bacterial ribosomal protein bL17 family. As to quaternary structure, part of the 50S ribosomal subunit. Contacts protein L32.

The chain is Large ribosomal subunit protein bL17 from Desulfitobacterium hafniense (strain DSM 10664 / DCB-2).